Here is a 186-residue protein sequence, read N- to C-terminus: Ribosome-recycling factor (186 aa).

The protein belongs to the RRF family.

The protein resides in the cytoplasm. In terms of biological role, responsible for the release of ribosomes from messenger RNA at the termination of protein biosynthesis. May increase the efficiency of translation by recycling ribosomes from one round of translation to another. The protein is Ribosome-recycling factor of Pediococcus pentosaceus (strain ATCC 25745 / CCUG 21536 / LMG 10740 / 183-1w).